Here is a 231-residue protein sequence, read N- to C-terminus: Trypsin-2 (231 aa).

The signal sequence occupies residues 1 to 4 (AAFA). Positions 5 to 9 (TEDDK) are cleaved as a propeptide — activation peptide. The Peptidase S1 domain maps to 10–229 (IVGGYECKAY…FNDWLTSTMA (220 aa)). 6 disulfide bridges follow: cysteine 16–cysteine 145, cysteine 34–cysteine 50, cysteine 118–cysteine 218, cysteine 125–cysteine 191, cysteine 156–cysteine 170, and cysteine 181–cysteine 205. Histidine 49 serves as the catalytic Charge relay system. Ca(2+)-binding residues include glutamate 61, asparagine 63, valine 66, and glutamate 71. Aspartate 93 (charge relay system) is an active-site residue. The active-site Charge relay system is the serine 185.

It belongs to the peptidase S1 family. Ca(2+) serves as cofactor.

It is found in the secreted. Its subcellular location is the extracellular space. The catalysed reaction is Preferential cleavage: Arg-|-Xaa, Lys-|-Xaa.. This Salmo salar (Atlantic salmon) protein is Trypsin-2.